A 172-amino-acid polypeptide reads, in one-letter code: Transcriptional repressor NrdR (172 aa).

Residues 3 to 34 (CPFCSYSDNRVLESRLAEEGESVRRRRECKQC) fold into a zinc finger. In terms of domain architecture, ATP-cone spans 49 to 139 (TVVIKRNGRR…VYRKFKGVAD (91 aa)).

It belongs to the NrdR family. Requires Zn(2+) as cofactor.

Negatively regulates transcription of bacterial ribonucleotide reductase nrd genes and operons by binding to NrdR-boxes. The protein is Transcriptional repressor NrdR of Gloeobacter violaceus (strain ATCC 29082 / PCC 7421).